Reading from the N-terminus, the 168-residue chain is Transmembrane protein 229b (168 aa).

Residues Met-1–Tyr-14 lie on the Cytoplasmic side of the membrane. A helical transmembrane segment spans residues Leu-15–Val-35. Topologically, residues Asn-36 to Lys-40 are extracellular. Residues Phe-41 to Glu-61 form a helical membrane-spanning segment. Residues Lys-62–Asn-72 lie on the Cytoplasmic side of the membrane. The chain crosses the membrane as a helical span at residues Ile-73–Leu-93. Residues Ile-94–Asp-109 lie on the Extracellular side of the membrane. Residues Phe-110–Ile-130 traverse the membrane as a helical segment. Residues Met-131–Asn-168 are Cytoplasmic-facing.

It belongs to the TMEM229 family.

The protein localises to the membrane. This chain is Transmembrane protein 229b (tmem229b), found in Xenopus tropicalis (Western clawed frog).